The chain runs to 110 residues: Large ribosomal subunit protein uL22 (110 aa).

This sequence belongs to the universal ribosomal protein uL22 family. Part of the 50S ribosomal subunit.

Its function is as follows. This protein binds specifically to 23S rRNA; its binding is stimulated by other ribosomal proteins, e.g. L4, L17, and L20. It is important during the early stages of 50S assembly. It makes multiple contacts with different domains of the 23S rRNA in the assembled 50S subunit and ribosome. The globular domain of the protein is located near the polypeptide exit tunnel on the outside of the subunit, while an extended beta-hairpin is found that lines the wall of the exit tunnel in the center of the 70S ribosome. This Pectobacterium atrosepticum (strain SCRI 1043 / ATCC BAA-672) (Erwinia carotovora subsp. atroseptica) protein is Large ribosomal subunit protein uL22.